Consider the following 550-residue polypeptide: Methyl-coenzyme M reductase subunit alpha (550 aa).

Gln147 contacts coenzyme F430. Residues Arg225, 256-257 (KH), and Arg270 contribute to the coenzyme B site. His257 bears the Pros-methylhistidine mark. Arg271 is modified (5-methylarginine). Residue Tyr333 coordinates coenzyme M. A 2-methylglutamine modification is found at Gln400. Tyr444 provides a ligand contact to coenzyme M. Position 445 is a 1-thioglycine (Gly445). Asp450 is subject to (Z)-2,3-didehydroaspartate. Cys452 is subject to S-methylcysteine.

The protein belongs to the methyl-coenzyme M reductase alpha subunit family. MCR is a hexamer of two alpha, two beta, and two gamma chains, forming a dimer of heterotrimers. Coenzyme F430 serves as cofactor. Post-translationally, the alpha subunit contains six modified amino acids near the active site region. Is methylated on His-257, Arg-271, Gln-400 and Cys-452, probably by the action of specific S-adenosylmethionine-dependent methyltransferases. Also contains a thioglycine at position 445, forming a thiopeptide bond. Contains a didehydroaspartate residue at position 450. The methylation on C5 of Arg-271 is a post-translational methylation not essential in vivo, but which plays a role for the stability and structural integrity of MCR.

The protein resides in the cytoplasm. The enzyme catalyses coenzyme B + methyl-coenzyme M = methane + coenzyme M-coenzyme B heterodisulfide. It functions in the pathway one-carbon metabolism; methyl-coenzyme M reduction; methane from methyl-coenzyme M: step 1/1. Its function is as follows. Component of the methyl-coenzyme M reductase (MCR) I that catalyzes the reductive cleavage of methyl-coenzyme M (CoM-S-CH3 or 2-(methylthio)ethanesulfonate) using coenzyme B (CoB or 7-mercaptoheptanoylthreonine phosphate) as reductant which results in the production of methane and the mixed heterodisulfide of CoB and CoM (CoM-S-S-CoB). This is the final step in methanogenesis. The chain is Methyl-coenzyme M reductase subunit alpha (mcrA) from Methanothermobacter thermautotrophicus (strain ATCC 29096 / DSM 1053 / JCM 10044 / NBRC 100330 / Delta H) (Methanobacterium thermoautotrophicum).